The chain runs to 102 residues: MSLTEDNNNTTITIAKGENKEIILHGNPTTGYSWVVDSCEGLSNTVEYVADQHAPGICGCGGKYHIKITGTQTGEGKIVLVYRRPWAPNANDRTFTLKVNVQ.

The short motif at 27 to 32 (NPTTGY) is the BC loop element. A DE loop motif is present at residues 51–61 (DQHAPGICGCG). The short motif at 85–93 (PWAPNANDR) is the FG loop element.

Belongs to the protease inhibitor I42 family. Monomer. During oxidative conditions, forms homooligomers; disulfide-linked. Interacts with cysteine protease CP2. Interacts with cysteine protease CP5. During oxidative conditions, cys-39, cys-58 and cys-60 react to form intra- and inter-molecular disulfide bonds resulting in the loss of the protein inhibitory activity.

It localises to the cytoplasm. Cysteine protease inhibitor. Inhibits cysteine proteases CP1, CP2 and CP5. May protect the cytosol against cysteine proteases released by damaged intracellular vesicles. The chain is Amoebiasin-1 from Entamoeba histolytica (strain ATCC 30459 / HM-1:IMSS / ABRM).